The chain runs to 183 residues: UPF0200 protein Memar_1556 (183 aa).

8-15 (GMPASGKG) contacts ATP.

The protein belongs to the UPF0200 family.

The polypeptide is UPF0200 protein Memar_1556 (Methanoculleus marisnigri (strain ATCC 35101 / DSM 1498 / JR1)).